The primary structure comprises 83 residues: RNA-binding protein Hfq (83 aa).

The Sm domain occupies 11–71; the sequence is DVFLNYIRKN…ISTIMPASPV (61 aa).

It belongs to the Hfq family. As to quaternary structure, homohexamer.

In terms of biological role, RNA chaperone that binds small regulatory RNA (sRNAs) and mRNAs to facilitate mRNA translational regulation in response to envelope stress, environmental stress and changes in metabolite concentrations. Also binds with high specificity to tRNAs. This Rhodospirillum rubrum (strain ATCC 11170 / ATH 1.1.1 / DSM 467 / LMG 4362 / NCIMB 8255 / S1) protein is RNA-binding protein Hfq.